The chain runs to 356 residues: MSTVTITDLARENVRNLTPYQSARRLGGNGDVWLNANEYPTAVEFQLTQQTLNRYPECQPKAVIDNYAQYAGIKPEQVLVSRGADEGIELLIRAFCEPGKDAILYCPPTYGMYSVSAETIGVECRTVPTLDNWQLDLQGISDKLDGVKVVYVCSPNNPTGQLINPQDFRTLLELTRGKAIVVADEAYIEFCPQASLAGWLTEYPHLAILRTLSKAFALAGLRCGFTLANEEVINLLMKVIAPYPLSTPVADIAAQALSPQGIVAMRERVVQIIAEREYLIAALKEIPCVEQVFDSETNYILARFKASSAVFKSLWDQGIILRDQNKQPSLSGCLRITVGTREESQRVIDALRAEQV.

Lys214 carries the N6-(pyridoxal phosphate)lysine modification.

It belongs to the class-II pyridoxal-phosphate-dependent aminotransferase family. Histidinol-phosphate aminotransferase subfamily. Homodimer. Pyridoxal 5'-phosphate is required as a cofactor.

The catalysed reaction is L-histidinol phosphate + 2-oxoglutarate = 3-(imidazol-4-yl)-2-oxopropyl phosphate + L-glutamate. It functions in the pathway amino-acid biosynthesis; L-histidine biosynthesis; L-histidine from 5-phospho-alpha-D-ribose 1-diphosphate: step 7/9. In Escherichia coli O7:K1 (strain IAI39 / ExPEC), this protein is Histidinol-phosphate aminotransferase.